We begin with the raw amino-acid sequence, 877 residues long: Leucine--tRNA ligase (877 aa).

The 'HIGH' region signature appears at 48–58; that stretch reads PYPSGKLHMGH. The 'KMSKS' region motif lies at 636-640; sequence KMSKS. Lys639 provides a ligand contact to ATP.

This sequence belongs to the class-I aminoacyl-tRNA synthetase family.

The protein resides in the cytoplasm. It carries out the reaction tRNA(Leu) + L-leucine + ATP = L-leucyl-tRNA(Leu) + AMP + diphosphate. The sequence is that of Leucine--tRNA ligase from Ralstonia pickettii (strain 12J).